The chain runs to 428 residues: GTPase Obg (428 aa).

One can recognise an Obg domain in the interval 1 to 158 (MFVDKVKVYA…RNLLLELKVL (158 aa)). One can recognise an OBG-type G domain in the interval 159–329 (ADVGLVGFPS…LMLAIADELE (171 aa)). GTP-binding positions include 165-172 (GFPSVGKS), 190-194 (FTTIT), 212-215 (DLPG), 282-285 (NKMD), and 310-312 (SAI). Serine 172 and threonine 192 together coordinate Mg(2+). The OCT domain maps to 350 to 428 (KHELPIEPFT…IMKFEFEFVE (79 aa)).

Belongs to the TRAFAC class OBG-HflX-like GTPase superfamily. OBG GTPase family. In terms of assembly, monomer. Mg(2+) is required as a cofactor.

The protein localises to the cytoplasm. In terms of biological role, an essential GTPase which binds GTP, GDP and possibly (p)ppGpp with moderate affinity, with high nucleotide exchange rates and a fairly low GTP hydrolysis rate. Plays a role in control of the cell cycle, stress response, ribosome biogenesis and in those bacteria that undergo differentiation, in morphogenesis control. This Shouchella clausii (strain KSM-K16) (Alkalihalobacillus clausii) protein is GTPase Obg.